Reading from the N-terminus, the 128-residue chain is MLQIAKLCLATSGRITAQRYVAVTTARAIDQKWREAKGLPENPNAFGPLTNLPDYTFLDGRPTPLGSNQKKRLERQQEIATKIVELSGELEFAKQRYERQRVAAATEKQRIIQNKLKPKGHLMLKQKK.

A mitochondrion-targeting transit peptide spans 1-28 (MLQIAKLCLATSGRITAQRYVAVTTARA).

The protein belongs to the mitochondrion-specific ribosomal protein mL52 family. In terms of assembly, component of the mitochondrial ribosome large subunit (39S) which comprises a 16S rRNA and about 50 distinct proteins.

It localises to the mitochondrion. The protein is Large ribosomal subunit protein mL52 (mRpL52) of Drosophila pseudoobscura pseudoobscura (Fruit fly).